Consider the following 70-residue polypeptide: Large ribosomal subunit protein bL31 (70 aa).

Zn(2+) contacts are provided by Cys16, Cys18, Cys37, and Cys40.

The protein belongs to the bacterial ribosomal protein bL31 family. Type A subfamily. As to quaternary structure, part of the 50S ribosomal subunit. It depends on Zn(2+) as a cofactor.

Functionally, binds the 23S rRNA. This chain is Large ribosomal subunit protein bL31, found in Shewanella sediminis (strain HAW-EB3).